Consider the following 130-residue polypeptide: Sirohydrochlorin cobaltochelatase (130 aa).

His-12 functions as the Proton acceptor in the catalytic mechanism. Co(2+) is bound at residue His-12. His-12 contributes to the Ni(2+) binding site. Substrate is bound by residues Glu-48 and 73 to 78 (LASGVH). His-78 contacts Co(2+). His-78 serves as a coordination point for Ni(2+).

Belongs to the CbiX family. CbiXS subfamily. Homotetramer; dimer of dimers.

It catalyses the reaction Co-sirohydrochlorin + 2 H(+) = sirohydrochlorin + Co(2+). The enzyme catalyses Ni-sirohydrochlorin + 2 H(+) = sirohydrochlorin + Ni(2+). The protein operates within cofactor biosynthesis; adenosylcobalamin biosynthesis; cob(II)yrinate a,c-diamide from sirohydrochlorin (anaerobic route): step 1/10. In terms of biological role, catalyzes the insertion of Co(2+) into sirohydrochlorin as part of the anaerobic pathway to cobalamin biosynthesis. Involved in the biosynthesis of the unique nickel-containing tetrapyrrole coenzyme F430, the prosthetic group of methyl-coenzyme M reductase (MCR), which plays a key role in methanogenesis and anaerobic methane oxidation. Catalyzes the insertion of Ni(2+) into sirohydrochlorin to yield Ni-sirohydrochlorin. The sequence is that of Sirohydrochlorin cobaltochelatase from Methanosarcina barkeri (strain Fusaro / DSM 804).